Reading from the N-terminus, the 453-residue chain is Ribulose bisphosphate carboxylase large chain (453 aa).

The propeptide occupies 1–2 (MS). Residue Pro-3 is modified to N-acetylproline. Lys-14 is modified (N6,N6,N6-trimethyllysine). Substrate is bound by residues Asn-123 and Thr-173. The active-site Proton acceptor is Lys-175. Lys-177 provides a ligand contact to substrate. 3 residues coordinate Mg(2+): Lys-201, Asp-203, and Glu-204. Lys-201 carries the N6-carboxylysine modification. His-294 (proton acceptor) is an active-site residue. 3 residues coordinate substrate: Arg-295, His-327, and Ser-379.

This sequence belongs to the RuBisCO large chain family. Type I subfamily. As to quaternary structure, heterohexadecamer of 8 large chains and 8 small chains; disulfide-linked. The disulfide link is formed within the large subunit homodimers. Mg(2+) serves as cofactor. The disulfide bond which can form in the large chain dimeric partners within the hexadecamer appears to be associated with oxidative stress and protein turnover.

It localises to the plastid. It is found in the chloroplast. It carries out the reaction 2 (2R)-3-phosphoglycerate + 2 H(+) = D-ribulose 1,5-bisphosphate + CO2 + H2O. The enzyme catalyses D-ribulose 1,5-bisphosphate + O2 = 2-phosphoglycolate + (2R)-3-phosphoglycerate + 2 H(+). Its function is as follows. RuBisCO catalyzes two reactions: the carboxylation of D-ribulose 1,5-bisphosphate, the primary event in carbon dioxide fixation, as well as the oxidative fragmentation of the pentose substrate in the photorespiration process. Both reactions occur simultaneously and in competition at the same active site. This chain is Ribulose bisphosphate carboxylase large chain, found in Asperula laevigata (Smooth woodruff).